Consider the following 145-residue polypeptide: Peptide methionine sulfoxide reductase MsrB (145 aa).

The region spanning 4–127 (SDELKQRIGD…NSAALKFIPY (124 aa)) is the MsrB domain. Residue Cys-116 is the Nucleophile of the active site.

The protein belongs to the MsrB Met sulfoxide reductase family.

The enzyme catalyses L-methionyl-[protein] + [thioredoxin]-disulfide + H2O = L-methionyl-(R)-S-oxide-[protein] + [thioredoxin]-dithiol. The chain is Peptide methionine sulfoxide reductase MsrB from Streptococcus pyogenes serotype M18 (strain MGAS8232).